Reading from the N-terminus, the 462-residue chain is Solute carrier family 41 member 3 (462 aa).

9 consecutive transmembrane segments (helical) span residues 41–61, 121–141, 163–183, 194–214, 225–245, 258–278, 351–371, 380–400, and 424–444; these read CQVAIPILLSGLGMMTAGLVM, LAVVQVQATVVGLLAAVASLM, VITAFLAALALGILMICIVIG, IATPIAASLGDLITLSILALM, WYLTPLVCIGFLALTPLWIFI, YGWFPIILAMIISSFGGLILS, VLLFLVVPGHLIFFYLICLVE, IFVLLYLMAGMMQVVILLYLA, and GLGDLLGTSLLALCFLLDWLL.

Belongs to the SLC41A transporter family.

The protein localises to the mitochondrion inner membrane. The enzyme catalyses Mg(2+)(in) + 2 Na(+)(out) = Mg(2+)(out) + 2 Na(+)(in). Na(+)/Mg(2+) ion exchanger that acts as a predominant Mg(2+) efflux system at the mitochondrial inner membrane. This chain is Solute carrier family 41 member 3 (Slc41a3), found in Rattus norvegicus (Rat).